Reading from the N-terminus, the 185-residue chain is Elongation factor P (185 aa).

The protein belongs to the elongation factor P family.

Its subcellular location is the cytoplasm. It participates in protein biosynthesis; polypeptide chain elongation. Functionally, involved in peptide bond synthesis. Stimulates efficient translation and peptide-bond synthesis on native or reconstituted 70S ribosomes in vitro. Probably functions indirectly by altering the affinity of the ribosome for aminoacyl-tRNA, thus increasing their reactivity as acceptors for peptidyl transferase. This chain is Elongation factor P, found in Bordetella bronchiseptica (strain ATCC BAA-588 / NCTC 13252 / RB50) (Alcaligenes bronchisepticus).